The sequence spans 344 residues: Olfactory receptor class A-like protein 4 (344 aa).

Over 1–10 (MSEVLTVDAV) the chain is Extracellular. The chain crosses the membrane as a helical span at residues 11–31 (LFGLLVFSGIIGNIMVIYVVF). Residues 32 to 47 (DCAKLCASRHLPPSDT) lie on the Cytoplasmic side of the membrane. Residues 48–68 (ILVHLCLANLLTSVFRTVPIF) form a helical membrane-spanning segment. At 69 to 84 (VSDLGLQVWLTAGWCR) the chain is on the extracellular side. Cysteines 83 and 169 form a disulfide. Residues 85–105 (VFMLLWVWWRAVGCWVTLALS) traverse the membrane as a helical segment. Topologically, residues 106–130 (AFHCATLRRQHVSMGPLGHSRERRR) are cytoplasmic. The chain crosses the membrane as a helical span at residues 131-151 (VWVVLAVVWAANLLFSLPALV). At 152–186 (YTTQVRGNATVELMVISCTTRPLLGCVWEFPTFQQ) the chain is on the extracellular side. N-linked (GlcNAc...) asparagine glycosylation is present at Asn159. Residues 187–207 (GYAFASSSLALNEVLPLVLMV) traverse the membrane as a helical segment. The Cytoplasmic portion of the chain corresponds to 208-246 (GTNLATLQALGKHIRTVRAGGSTGAELDRHVSSERKAGH). A helical transmembrane segment spans residues 247 to 267 (VIMALVALFVGCWVLQVAAVT). Topologically, residues 268–279 (YYNHNRGAHAEG) are extracellular. A helical membrane pass occupies residues 280–300 (LLTVAHFSASLFVGFSPLVVA). The Cytoplasmic portion of the chain corresponds to 301–344 (LGHGKLRRRISGILQSCMHRLKQTQDKPAEITEKDGRTTQSAMK). Basic and acidic residues predominate over residues 324 to 337 (TQDKPAEITEKDGR). The segment at 324–344 (TQDKPAEITEKDGRTTQSAMK) is disordered.

It belongs to the G-protein coupled receptor 1 family. As to expression, highly expressed in the olfactory rosette. Specifically localizes to crypt neurons in the olfactory neuroepithelium. Colocalizes with the inhibitory G-protein gnaia in crypt neurons. Not detected in other tissues tested.

Its subcellular location is the cell membrane. Functionally, probable olfactory receptor. The chain is Olfactory receptor class A-like protein 4 (ora4) from Danio rerio (Zebrafish).